A 514-amino-acid chain; its full sequence is GMP synthase [glutamine-hydrolyzing] (514 aa).

The region spanning 7 to 197 is the Glutamine amidotransferase type-1 domain; the sequence is KVLILDFGSQ…LFNICKCERN (191 aa). Cys84 acts as the Nucleophile in catalysis. Active-site residues include His171 and Glu173. The GMPS ATP-PPase domain maps to 198–389; sequence WNMGSFIEYE…LKLPEDIVYR (192 aa). 225 to 231 contributes to the ATP binding site; it reads SGGVDSS.

Homodimer.

The catalysed reaction is XMP + L-glutamine + ATP + H2O = GMP + L-glutamate + AMP + diphosphate + 2 H(+). It functions in the pathway purine metabolism; GMP biosynthesis; GMP from XMP (L-Gln route): step 1/1. In terms of biological role, catalyzes the synthesis of GMP from XMP. The polypeptide is GMP synthase [glutamine-hydrolyzing] (Brachyspira hyodysenteriae (strain ATCC 49526 / WA1)).